Consider the following 252-residue polypeptide: Ribosomal RNA large subunit methyltransferase E (252 aa).

S-adenosyl-L-methionine contacts are provided by Gly-48, Trp-50, Asp-68, Asp-84, and Asp-107. Lys-147 serves as the catalytic Proton acceptor. Residues Pro-194 to Glu-252 enclose the TRAM domain.

Belongs to the class I-like SAM-binding methyltransferase superfamily. RNA methyltransferase RlmE family.

It localises to the cytoplasm. It carries out the reaction uridine(2552) in 23S rRNA + S-adenosyl-L-methionine = 2'-O-methyluridine(2552) in 23S rRNA + S-adenosyl-L-homocysteine + H(+). Its function is as follows. Specifically methylates the uridine in position 2552 of 23S rRNA at the 2'-O position of the ribose in the fully assembled 50S ribosomal subunit. This is Ribosomal RNA large subunit methyltransferase E from Natronomonas pharaonis (strain ATCC 35678 / DSM 2160 / CIP 103997 / JCM 8858 / NBRC 14720 / NCIMB 2260 / Gabara) (Halobacterium pharaonis).